Reading from the N-terminus, the 914-residue chain is Protein translocase subunit SecA (914 aa).

Residues Q86, 104 to 108 (GEGKT), and D512 each bind ATP. Residues C898, C900, C909, and H910 each contribute to the Zn(2+) site.

This sequence belongs to the SecA family. As to quaternary structure, monomer and homodimer. Part of the essential Sec protein translocation apparatus which comprises SecA, SecYEG and auxiliary proteins SecDF-YajC and YidC. It depends on Zn(2+) as a cofactor.

The protein resides in the cell inner membrane. It localises to the cytoplasm. The catalysed reaction is ATP + H2O + cellular proteinSide 1 = ADP + phosphate + cellular proteinSide 2.. Its function is as follows. Part of the Sec protein translocase complex. Interacts with the SecYEG preprotein conducting channel. Has a central role in coupling the hydrolysis of ATP to the transfer of proteins into and across the cell membrane, serving both as a receptor for the preprotein-SecB complex and as an ATP-driven molecular motor driving the stepwise translocation of polypeptide chains across the membrane. The protein is Protein translocase subunit SecA of Bordetella petrii (strain ATCC BAA-461 / DSM 12804 / CCUG 43448).